The chain runs to 472 residues: Eukaryotic translation initiation factor 2 subunit 3 (472 aa).

Residue Ala2 is modified to N-acetylalanine; partial. The tr-type G domain occupies Gln39–Leu247. A G1 region spans residues Gly48–Ser55. Ala51–Thr56 lines the GTP pocket. The segment at Asn76–Lys80 is G2. The segment at Asp134 to Gly137 is G3. GTP is bound by residues Asn190–Asp193 and Ser225–Gln227. Residues Asn190–Asp193 form a G4 region. The tract at residues Ser225 to Gln227 is G5. Positions Gly457–Val469 are interacts with CDC123.

This sequence belongs to the TRAFAC class translation factor GTPase superfamily. Classic translation factor GTPase family. EIF2G subfamily. In terms of assembly, eukaryotic translation initiation factor 2 eIF2 is a heterotrimeric complex composed of an alpha (EIF2S1), a beta (EIF2S2) and a gamma (EIF2S3) chain. eIF2 is member of the 43S pre-initiation complex (43S PIC).

The protein resides in the cytoplasm. It is found in the cytosol. The enzyme catalyses GTP + H2O = GDP + phosphate + H(+). Its function is as follows. Member of the eIF2 complex that functions in the early steps of protein synthesis by forming a ternary complex with GTP and initiator tRNA. This complex binds to a 40S ribosomal subunit, followed by mRNA binding to form the 43S pre-initiation complex (43S PIC). Junction of the 60S ribosomal subunit to form the 80S initiation complex is preceded by hydrolysis of the GTP bound to eIF2 and release of an eIF2-GDP binary complex. In order for eIF2 to recycle and catalyze another round of initiation, the GDP bound to eIF2 must exchange with GTP by way of a reaction catalyzed by eIF-2B. This is Eukaryotic translation initiation factor 2 subunit 3 (EIF2S3) from Gallus gallus (Chicken).